Reading from the N-terminus, the 153-residue chain is Protein ElaA (153 aa).

The 145-residue stretch at 7-151 (LHHSELSVSQ…PHIGMAREVI (145 aa)) folds into the N-acetyltransferase domain.

Belongs to the UPF0039 (ElaA) family.

The protein is Protein ElaA (elaA) of Escherichia coli (strain K12).